The following is a 772-amino-acid chain: Probable adenosine deaminase (772 aa).

2 residues coordinate Zn(2+): H22 and H24. 3 residues coordinate substrate: H24, D26, and G180. H207 lines the Zn(2+) pocket. Catalysis depends on E210, which acts as the Proton donor. Zn(2+) is bound at residue D288.

This sequence belongs to the metallo-dependent hydrolases superfamily. Adenosine and AMP deaminases family. The cofactor is Zn(2+).

The catalysed reaction is adenosine + H2O + H(+) = inosine + NH4(+). Functionally, catalyzes the hydrolytic deamination of adenosine. Plays an important role in purine metabolism and in adenosine homeostasis, and may thereby contribute to cellular signaling events. This chain is Probable adenosine deaminase (ada), found in Dictyostelium discoideum (Social amoeba).